A 198-amino-acid chain; its full sequence is Large ribosomal subunit protein bL25 (198 aa).

It belongs to the bacterial ribosomal protein bL25 family. CTC subfamily. In terms of assembly, part of the 50S ribosomal subunit; part of the 5S rRNA/L5/L18/L25 subcomplex. Contacts the 5S rRNA. Binds to the 5S rRNA independently of L5 and L18.

In terms of biological role, this is one of the proteins that binds to the 5S RNA in the ribosome where it forms part of the central protuberance. The chain is Large ribosomal subunit protein bL25 from Pseudomonas putida (strain W619).